The following is a 238-amino-acid chain: Phosphoglycolate phosphatase (238 aa).

Catalysis depends on Asp-8, which acts as the Nucleophile. Mg(2+) contacts are provided by Asp-8 and Asp-10. Lys-163 provides a ligand contact to substrate. Asp-186 and Asp-190 together coordinate Mg(2+).

It belongs to the archaeal SPP-like hydrolase family. It depends on Mg(2+) as a cofactor.

The enzyme catalyses 2-phosphoglycolate + H2O = glycolate + phosphate. Catalyzes the dephosphorylation of 2-phosphoglycolate. The protein is Phosphoglycolate phosphatase of Staphylothermus marinus (strain ATCC 43588 / DSM 3639 / JCM 9404 / F1).